The following is a 393-amino-acid chain: MLPEELAGACGIDLTDARRIVSLAHRLGELPARAPATVRRAALDAARSAGEIRTLALVERRASAEDPFVKYAFRLEDGATVESVRIPLERPGRYSACVSSQVGCALACAFCATGRMGLTRNLEAWEIVEQVRLIRRDLDATVGGGARVHGVLFQGMGEPLANADRVIQAIRVLSEPSAQAIDMRNITVCTAGLPSGIRRLAAEVPAVRLGLSLGSVRPGKRRLLMPIDGAHPLEEVLAAVGEHARASGHAPMWAYTLLADQNDTDEDAACLAALARGFAAQHGISPRLSLIPYNAIGAPGDPLPSPDGGDERGASADPFVRSARLDAFRAVLSAAGVGSIVRYSGGGDVGAACGQLARPSAEAQRPGGRRAPPRPGATAGAADVGPSAPPRPA.

E82 (proton acceptor) is an active-site residue. The region spanning 90–329 is the Radical SAM core domain; that stretch reads RPGRYSACVS…VRSARLDAFR (240 aa). C97 and C353 are oxidised to a cystine. C104, C108, and C111 together coordinate [4Fe-4S] cluster. S-adenosyl-L-methionine contacts are provided by residues 157–158, 212–214, and N294; these read GE and SLG. The active-site S-methylcysteine intermediate is C353. Positions 357–393 are disordered; it reads ARPSAEAQRPGGRRAPPRPGATAGAADVGPSAPPRPA. Over residues 373-382 the composition is skewed to low complexity; it reads PRPGATAGAA.

Belongs to the radical SAM superfamily. RlmN family. Requires [4Fe-4S] cluster as cofactor.

Its subcellular location is the cytoplasm. The polypeptide is Probable RNA methyltransferase sce3898 (Sorangium cellulosum (strain So ce56) (Polyangium cellulosum (strain So ce56))).